The primary structure comprises 571 residues: Proline--tRNA ligase (571 aa).

It belongs to the class-II aminoacyl-tRNA synthetase family. ProS type 1 subfamily. Homodimer.

The protein localises to the cytoplasm. It catalyses the reaction tRNA(Pro) + L-proline + ATP = L-prolyl-tRNA(Pro) + AMP + diphosphate. Functionally, catalyzes the attachment of proline to tRNA(Pro) in a two-step reaction: proline is first activated by ATP to form Pro-AMP and then transferred to the acceptor end of tRNA(Pro). As ProRS can inadvertently accommodate and process non-cognate amino acids such as alanine and cysteine, to avoid such errors it has two additional distinct editing activities against alanine. One activity is designated as 'pretransfer' editing and involves the tRNA(Pro)-independent hydrolysis of activated Ala-AMP. The other activity is designated 'posttransfer' editing and involves deacylation of mischarged Ala-tRNA(Pro). The misacylated Cys-tRNA(Pro) is not edited by ProRS. The sequence is that of Proline--tRNA ligase from Aliivibrio fischeri (strain MJ11) (Vibrio fischeri).